The sequence spans 216 residues: MOB kinase activator-like 2A (216 aa).

4 residues coordinate Zn(2+): cysteine 81, cysteine 86, histidine 162, and histidine 167.

Belongs to the MOB1/phocein family.

The protein localises to the nucleus. This Arabidopsis thaliana (Mouse-ear cress) protein is MOB kinase activator-like 2A.